A 556-amino-acid chain; its full sequence is Innexin-7 (556 aa).

Helical transmembrane passes span 21-41 (LVAS…AVLI), 127-147 (FFLL…KYFA), and 213-233 (AYYV…NVIL). Asparagine 267 is a glycosylation site (N-linked (GlcNAc...) asparagine). The chain crosses the membrane as a helical span at residues 310–330 (IFVFLWAWYILLTAFTVGNLF). The segment at 431–556 (DESQVESGKN…IPKTAEKKHW (126 aa)) is disordered. Positions 435–447 (VESGKNTAPSTSH) are enriched in polar residues. Over residues 452–461 (RGTEQLEKNV) the composition is skewed to basic and acidic residues. Polar residues predominate over residues 463–474 (SRQGSLSTQLRP). The segment covering 500–513 (KGSKKPSPTKKKAS) has biased composition (basic residues). Positions 514-527 (SKNSPQSSSNSRRP) are enriched in low complexity. Over residues 539-556 (HHHEPDSKIPKTAEKKHW) the composition is skewed to basic and acidic residues.

This sequence belongs to the pannexin family.

It is found in the cell membrane. The protein resides in the cell junction. It localises to the gap junction. Its function is as follows. Structural component of the gap junctions. The sequence is that of Innexin-7 (inx-7) from Caenorhabditis elegans.